The primary structure comprises 199 residues: Guanylate kinase (199 aa).

Residues 20–198 form the Guanylate kinase-like domain; it reads GKLIILTGPS…ALQAIEVALF (179 aa). Residue 27–34 coordinates ATP; that stretch reads GPSGVGKG.

Belongs to the guanylate kinase family.

It localises to the cytoplasm. The enzyme catalyses GMP + ATP = GDP + ADP. In terms of biological role, essential for recycling GMP and indirectly, cGMP. The polypeptide is Guanylate kinase (Nostoc sp. (strain PCC 7120 / SAG 25.82 / UTEX 2576)).